The sequence spans 544 residues: Light-independent protochlorophyllide reductase subunit B (544 aa).

Asp-36 is a [4Fe-4S] cluster binding site. Asp-286 acts as the Proton donor in catalysis. 421 to 422 (GM) is a binding site for substrate.

The protein belongs to the ChlB/BchB/BchZ family. In terms of assembly, protochlorophyllide reductase is composed of three subunits; BchL, BchN and BchB. Forms a heterotetramer of two BchB and two BchN subunits. [4Fe-4S] cluster serves as cofactor.

The enzyme catalyses chlorophyllide a + oxidized 2[4Fe-4S]-[ferredoxin] + 2 ADP + 2 phosphate = protochlorophyllide a + reduced 2[4Fe-4S]-[ferredoxin] + 2 ATP + 2 H2O. Its pathway is porphyrin-containing compound metabolism; bacteriochlorophyll biosynthesis (light-independent). In terms of biological role, component of the dark-operative protochlorophyllide reductase (DPOR) that uses Mg-ATP and reduced ferredoxin to reduce ring D of protochlorophyllide (Pchlide) to form chlorophyllide a (Chlide). This reaction is light-independent. The NB-protein (BchN-BchB) is the catalytic component of the complex. The protein is Light-independent protochlorophyllide reductase subunit B of Chloroflexus aggregans (strain MD-66 / DSM 9485).